The chain runs to 185 residues: MIEETLLEAEEKMDKAVEVAKEDFSAVRTGRANPGLFAKVMVDYYGAPTPLQQLASFAVPEARTLLITPFDRSALGDIEKALSNSEVGANPSNDGNVIRVVMPELTQERRREYVKIVRGKSEDAKISIRNIRRKAKESLDKIVKDGDAGEDEGSRAEKELDGLTKTHTENIDELLKRKEAELLEV.

A disordered region spans residues 142-165 (IVKDGDAGEDEGSRAEKELDGLTK).

The protein belongs to the RRF family.

It localises to the cytoplasm. Functionally, responsible for the release of ribosomes from messenger RNA at the termination of protein biosynthesis. May increase the efficiency of translation by recycling ribosomes from one round of translation to another. This chain is Ribosome-recycling factor, found in Renibacterium salmoninarum (strain ATCC 33209 / DSM 20767 / JCM 11484 / NBRC 15589 / NCIMB 2235).